The following is a 184-amino-acid chain: MRTIDKRIAPNVRLAATLDTGEDVALVLPRGTVLRDGDVLVADDGALVRVAAAHEAVLLVRAPDALTLTRAAYHLGNRHTPVEVGAGCLKLEYDPALADMLTRLGATVERASAPFQPEAGAYGGGHRHGHDATFAEDYALAQQVFDEHHGHSHSHSHSHDHDHDHDHDHQHGPSCSHGHHHGHR.

The disordered stretch occupies residues Glu147–Arg184. Residues His157 to His171 show a composition bias toward basic and acidic residues.

This sequence belongs to the UreE family.

It localises to the cytoplasm. Its function is as follows. Involved in urease metallocenter assembly. Binds nickel. Probably functions as a nickel donor during metallocenter assembly. This is Urease accessory protein UreE from Burkholderia mallei (strain ATCC 23344).